Here is a 166-residue protein sequence, read N- to C-terminus: Protein-export protein SecB (166 aa).

Belongs to the SecB family. Homotetramer, a dimer of dimers. One homotetramer interacts with 1 SecA dimer.

The protein resides in the cytoplasm. Functionally, one of the proteins required for the normal export of preproteins out of the cell cytoplasm. It is a molecular chaperone that binds to a subset of precursor proteins, maintaining them in a translocation-competent state. It also specifically binds to its receptor SecA. This is Protein-export protein SecB from Acidiphilium cryptum (strain JF-5).